The sequence spans 458 residues: Bifunctional protein GlmU (458 aa).

The interval 1–232 is pyrophosphorylase; sequence MISPLSVIIL…TFEIEGVNNR (232 aa). Residues 10 to 13, lysine 24, glutamine 79, 84 to 85, 106 to 108, glycine 142, glutamate 157, asparagine 172, and asparagine 230 contribute to the UDP-N-acetyl-alpha-D-glucosamine site; these read LAAG, GT, and YGD. Aspartate 108 contacts Mg(2+). Residue asparagine 230 participates in Mg(2+) binding. The tract at residues 233-253 is linker; the sequence is QQLASLERTWQGKLVADLQEA. An N-acetyltransferase region spans residues 254 to 458; sequence GVQFADPTRV…KDNFQRPTKK (205 aa). UDP-N-acetyl-alpha-D-glucosamine-binding residues include arginine 336 and lysine 354. The Proton acceptor role is filled by histidine 366. Residues tyrosine 369 and asparagine 380 each coordinate UDP-N-acetyl-alpha-D-glucosamine. Acetyl-CoA-binding positions include alanine 383, 389-390, serine 408, alanine 426, and arginine 443; that span reads NY.

In the N-terminal section; belongs to the N-acetylglucosamine-1-phosphate uridyltransferase family. This sequence in the C-terminal section; belongs to the transferase hexapeptide repeat family. As to quaternary structure, homotrimer. Mg(2+) serves as cofactor.

The protein localises to the cytoplasm. The enzyme catalyses alpha-D-glucosamine 1-phosphate + acetyl-CoA = N-acetyl-alpha-D-glucosamine 1-phosphate + CoA + H(+). The catalysed reaction is N-acetyl-alpha-D-glucosamine 1-phosphate + UTP + H(+) = UDP-N-acetyl-alpha-D-glucosamine + diphosphate. Its pathway is nucleotide-sugar biosynthesis; UDP-N-acetyl-alpha-D-glucosamine biosynthesis; N-acetyl-alpha-D-glucosamine 1-phosphate from alpha-D-glucosamine 6-phosphate (route II): step 2/2. It functions in the pathway nucleotide-sugar biosynthesis; UDP-N-acetyl-alpha-D-glucosamine biosynthesis; UDP-N-acetyl-alpha-D-glucosamine from N-acetyl-alpha-D-glucosamine 1-phosphate: step 1/1. It participates in bacterial outer membrane biogenesis; LPS lipid A biosynthesis. Functionally, catalyzes the last two sequential reactions in the de novo biosynthetic pathway for UDP-N-acetylglucosamine (UDP-GlcNAc). The C-terminal domain catalyzes the transfer of acetyl group from acetyl coenzyme A to glucosamine-1-phosphate (GlcN-1-P) to produce N-acetylglucosamine-1-phosphate (GlcNAc-1-P), which is converted into UDP-GlcNAc by the transfer of uridine 5-monophosphate (from uridine 5-triphosphate), a reaction catalyzed by the N-terminal domain. This Psychrobacter arcticus (strain DSM 17307 / VKM B-2377 / 273-4) protein is Bifunctional protein GlmU.